The following is a 504-amino-acid chain: Dimethylsulfoniopropionate lyase 5 (504 aa).

Belongs to the aspartate/glutamate racemases family. ALMA1 subfamily. In terms of assembly, homotetramer.

The enzyme catalyses S,S-dimethyl-beta-propiothetin = acrylate + dimethyl sulfide + H(+). Its function is as follows. Mediates cleavage of dimethylsulfoniopropionate (DMSP) into dimethyl sulfide (DMS) and acrylate. DMS is the principal form by which sulfur is transported from oceans to the atmosphere and is a key component of the ocean sulfur cycle. The sequence is that of Dimethylsulfoniopropionate lyase 5 from Emiliania huxleyi (strain CCMP1516).